Reading from the N-terminus, the 55-residue chain is Large ribosomal subunit protein bL33A (55 aa).

The protein belongs to the bacterial ribosomal protein bL33 family.

This Mycolicibacterium vanbaalenii (strain DSM 7251 / JCM 13017 / BCRC 16820 / KCTC 9966 / NRRL B-24157 / PYR-1) (Mycobacterium vanbaalenii) protein is Large ribosomal subunit protein bL33A.